A 339-amino-acid polypeptide reads, in one-letter code: Inositol 2-dehydrogenase 2 (339 aa).

Belongs to the Gfo/Idh/MocA family. Homotetramer.

It carries out the reaction myo-inositol + NAD(+) = scyllo-inosose + NADH + H(+). Functionally, involved in the oxidation of myo-inositol (MI) to 2-keto-myo-inositol (2KMI or 2-inosose). This chain is Inositol 2-dehydrogenase 2, found in Saccharopolyspora erythraea (strain ATCC 11635 / DSM 40517 / JCM 4748 / NBRC 13426 / NCIMB 8594 / NRRL 2338).